The chain runs to 472 residues: Eukaryotic translation initiation factor 2 subunit 3B (472 aa).

At Ala2 the chain carries N-acetylalanine. Position 16 is a phosphoserine (Ser16). Residues 39–248 (QATINIGTIG…IVKKIPVPPR (210 aa)) enclose the tr-type G domain. A G1 region spans residues 48–55 (GHVAHGKS). GTP is bound at residue 51-56 (AHGKST). The interval 76–80 (NITIK) is G2. Residues 134–137 (DCPG) are G3. GTP contacts are provided by residues 190–193 (NKID) and 225–227 (SAQ). The G4 stretch occupies residues 190-193 (NKID). The segment at 225–227 (SAQ) is G5.

The protein belongs to the TRAFAC class translation factor GTPase superfamily. Classic translation factor GTPase family. EIF2G subfamily. In terms of assembly, eIF2 is a heterotrimer composed of an alpha, a beta and a gamma chain. eIF2 is member of the 43S pre-initiation complex (43S PIC). Specifically expressed in testis at the mRNA level.

The enzyme catalyses GTP + H2O = GDP + phosphate + H(+). Its function is as follows. Member of the eIF2 complex that functions in the early steps of protein synthesis by forming a ternary complex with GTP and initiator tRNA. This complex binds to a 40S ribosomal subunit, followed by mRNA binding to form the 43S pre-initiation complex (43S PIC). Junction of the 60S ribosomal subunit to form the 80S initiation complex is preceded by hydrolysis of the GTP bound to eIF2 and release of an eIF2-GDP binary complex. In order for eIF2 to recycle and catalyze another round of initiation, the GDP bound to eIF2 must exchange with GTP by way of a reaction catalyzed by eIF-2B. In Homo sapiens (Human), this protein is Eukaryotic translation initiation factor 2 subunit 3B.